The following is a 212-amino-acid chain: Pyridoxine/pyridoxamine 5'-phosphate oxidase (212 aa).

Substrate contacts are provided by residues 8 to 11 (RREY) and K66. Residues 61–66 (RIVLLK), 76–77 (FT), R82, K83, and Q105 contribute to the FMN site. The substrate site is built by Y123, R127, and S131. Residues 140-141 (QS) and W185 each bind FMN. Substrate is bound at residue 191-193 (RLH). Position 195 (R195) interacts with FMN.

The protein belongs to the pyridoxamine 5'-phosphate oxidase family. In terms of assembly, homodimer. FMN is required as a cofactor.

The enzyme catalyses pyridoxamine 5'-phosphate + O2 + H2O = pyridoxal 5'-phosphate + H2O2 + NH4(+). It carries out the reaction pyridoxine 5'-phosphate + O2 = pyridoxal 5'-phosphate + H2O2. It functions in the pathway cofactor metabolism; pyridoxal 5'-phosphate salvage; pyridoxal 5'-phosphate from pyridoxamine 5'-phosphate: step 1/1. Its pathway is cofactor metabolism; pyridoxal 5'-phosphate salvage; pyridoxal 5'-phosphate from pyridoxine 5'-phosphate: step 1/1. Functionally, catalyzes the oxidation of either pyridoxine 5'-phosphate (PNP) or pyridoxamine 5'-phosphate (PMP) into pyridoxal 5'-phosphate (PLP). The polypeptide is Pyridoxine/pyridoxamine 5'-phosphate oxidase (Shewanella oneidensis (strain ATCC 700550 / JCM 31522 / CIP 106686 / LMG 19005 / NCIMB 14063 / MR-1)).